We begin with the raw amino-acid sequence, 87 residues long: HssA/B-like protein 31 (87 aa).

It belongs to the hssA/B family.

The protein is HssA/B-like protein 31 (hssl31) of Dictyostelium discoideum (Social amoeba).